Consider the following 224-residue polypeptide: Precorrin-2 dehydrogenase (224 aa).

Residues 26-27 (SV) and 47-50 (EFSQ) each bind NAD(+).

It belongs to the precorrin-2 dehydrogenase / sirohydrochlorin ferrochelatase family. As to quaternary structure, homodimer.

It carries out the reaction precorrin-2 + NAD(+) = sirohydrochlorin + NADH + 2 H(+). The protein operates within porphyrin-containing compound metabolism; siroheme biosynthesis; sirohydrochlorin from precorrin-2: step 1/1. In terms of biological role, involved in the archaeal biosynthesis of heme. Catalyzes the oxiation of precorrin-2 into sirohydroclorin. This Methanosarcina barkeri (strain Fusaro / DSM 804) protein is Precorrin-2 dehydrogenase.